Reading from the N-terminus, the 316-residue chain is Bifunctional riboflavin kinase/FMN adenylyltransferase (316 aa).

The protein belongs to the RibF family.

The catalysed reaction is riboflavin + ATP = FMN + ADP + H(+). The enzyme catalyses FMN + ATP + H(+) = FAD + diphosphate. It participates in cofactor biosynthesis; FAD biosynthesis; FAD from FMN: step 1/1. It functions in the pathway cofactor biosynthesis; FMN biosynthesis; FMN from riboflavin (ATP route): step 1/1. In terms of biological role, catalyzes the phosphorylation of riboflavin to FMN followed by the adenylation of FMN to FAD. In Bacillus subtilis (strain 168), this protein is Bifunctional riboflavin kinase/FMN adenylyltransferase (ribC).